The sequence spans 23 residues: Phospholipase A2 homolog 4 (23 aa).

This sequence belongs to the phospholipase A2 family. Group II subfamily. K49 sub-subfamily. As to quaternary structure, homodimer; non-covalently linked (probable alternative/compact dimer conformation in solution). Expressed by the venom gland.

The protein localises to the secreted. In terms of biological role, snake venom phospholipase A2 homolog that lacks enzymatic activity. Induces acute muscle damage after intramuscular injection in mice and disrupts negatively charged liposomes but not positively charged ones. Also exerts a weak anticoagulant effect only at concentrations of 40 ug/ml or higher. A model of myotoxic mechanism has been proposed: an apo Lys49-PLA2 is activated by the entrance of a hydrophobic molecule (e.g. fatty acid) at the hydrophobic channel of the protein leading to a reorientation of a monomer. This reorientation causes a transition between 'inactive' to 'active' states, causing alignment of C-terminal and membrane-docking sites (MDoS) side-by-side and putting the membrane-disruption sites (MDiS) in the same plane, exposed to solvent and in a symmetric position for both monomers. The MDoS region stabilizes the toxin on membrane by the interaction of charged residues with phospholipid head groups. Subsequently, the MDiS region destabilizes the membrane with penetration of hydrophobic residues. This insertion causes a disorganization of the membrane, allowing an uncontrolled influx of ions (i.e. calcium and sodium), and eventually triggering irreversible intracellular alterations and cell death. This Bothrops asper (Terciopelo) protein is Phospholipase A2 homolog 4.